Consider the following 62-residue polypeptide: Sperm protamine P1 (62 aa).

The segment at Met-1 to Tyr-62 is disordered.

The protein belongs to the protamine P1 family. Testis.

The protein resides in the nucleus. Its subcellular location is the chromosome. In terms of biological role, protamines substitute for histones in the chromatin of sperm during the haploid phase of spermatogenesis. They compact sperm DNA into a highly condensed, stable and inactive complex. The protein is Sperm protamine P1 (PRM1) of Petrogale xanthopus (Yellow-footed rock wallaby).